Consider the following 78-residue polypeptide: MNITNQGYAFIGAGLAMIAILGVGIGQGWSAAKSVEAVARNPEVVSKIRSQYILSAAVTETGALYCFIIAILLVFVAR.

A run of 2 helical transmembrane segments spans residues 9-29 and 56-76; these read AFIG…GQGW and AAVT…LVFV.

It belongs to the ATPase C chain family. F-type ATPases have 2 components, F(1) - the catalytic core - and F(0) - the membrane proton channel. F(1) has five subunits: alpha(3), beta(3), gamma(1), delta(1), epsilon(1). F(0) has three main subunits: a(1), b(2) and c(10-14). The alpha and beta chains form an alternating ring which encloses part of the gamma chain. F(1) is attached to F(0) by a central stalk formed by the gamma and epsilon chains, while a peripheral stalk is formed by the delta and b chains.

It localises to the cell membrane. Its function is as follows. F(1)F(0) ATP synthase produces ATP from ADP in the presence of a proton or sodium gradient. F-type ATPases consist of two structural domains, F(1) containing the extramembraneous catalytic core and F(0) containing the membrane proton channel, linked together by a central stalk and a peripheral stalk. During catalysis, ATP synthesis in the catalytic domain of F(1) is coupled via a rotary mechanism of the central stalk subunits to proton translocation. Functionally, key component of the F(0) channel; it plays a direct role in translocation across the membrane. A homomeric c-ring of between 10-14 subunits forms the central stalk rotor element with the F(1) delta and epsilon subunits. This Malacoplasma penetrans (strain HF-2) (Mycoplasma penetrans) protein is ATP synthase subunit c.